The following is a 979-amino-acid chain: UPF0182 protein Rv0064 (979 aa).

7 helical membrane passes run 19–41 (LVTA…DIYV), 63–85 (LAIV…LLAY), 114–136 (LFGW…FDWV), 174–196 (WLFV…FGGL), 208–230 (AARV…AYWL), 261–280 (LVLV…AIFL), and 285–307 (IPAM…WPLL). Positions 898-948 (GTGRVATARGGDAASAPPPGAGGPAPPQAVPPPRTTQPPAAPPRGPDVPPA) are disordered. Residues 913 to 946 (APPPGAGGPAPPQAVPPPRTTQPPAAPPRGPDVP) show a composition bias toward pro residues.

This sequence belongs to the UPF0182 family.

It localises to the cell membrane. This chain is UPF0182 protein Rv0064, found in Mycobacterium tuberculosis (strain ATCC 25618 / H37Rv).